Here is a 427-residue protein sequence, read N- to C-terminus: Serine--tRNA ligase (427 aa).

231 to 233 (TAE) contacts L-serine. Residue 262-264 (RSE) coordinates ATP. Glu-285 lines the L-serine pocket. 349 to 352 (EISS) serves as a coordination point for ATP. L-serine is bound at residue Ser-385.

It belongs to the class-II aminoacyl-tRNA synthetase family. Type-1 seryl-tRNA synthetase subfamily. In terms of assembly, homodimer. The tRNA molecule binds across the dimer.

The protein resides in the cytoplasm. It catalyses the reaction tRNA(Ser) + L-serine + ATP = L-seryl-tRNA(Ser) + AMP + diphosphate + H(+). The catalysed reaction is tRNA(Sec) + L-serine + ATP = L-seryl-tRNA(Sec) + AMP + diphosphate + H(+). Its pathway is aminoacyl-tRNA biosynthesis; selenocysteinyl-tRNA(Sec) biosynthesis; L-seryl-tRNA(Sec) from L-serine and tRNA(Sec): step 1/1. Its function is as follows. Catalyzes the attachment of serine to tRNA(Ser). Is also able to aminoacylate tRNA(Sec) with serine, to form the misacylated tRNA L-seryl-tRNA(Sec), which will be further converted into selenocysteinyl-tRNA(Sec). This is Serine--tRNA ligase from Allorhizobium ampelinum (strain ATCC BAA-846 / DSM 112012 / S4) (Agrobacterium vitis (strain S4)).